Consider the following 194-residue polypeptide: Inosine triphosphate pyrophosphatase (194 aa).

Ala2 carries the post-translational modification N-acetylalanine. Position 14–19 (14–19 (TGNAKK)) interacts with ITP. Residue Glu44 participates in Mg(2+) binding. ITP contacts are provided by residues Lys56, 72–73 (DT), Lys89, 149–152 (FGWD), Lys172, and 177–178 (HR).

The protein belongs to the HAM1 NTPase family. As to quaternary structure, homodimer. Mg(2+) serves as cofactor. Ubiquitous. Highly expressed in heart, liver, sex glands, thyroid and adrenal gland.

It is found in the cytoplasm. The catalysed reaction is ITP + H2O = IMP + diphosphate + H(+). The enzyme catalyses dITP + H2O = dIMP + diphosphate + H(+). It catalyses the reaction XTP + H2O = XMP + diphosphate + H(+). It carries out the reaction N(6)-hydroxy-dATP + H2O = N(6)-hydroxy-dAMP + diphosphate + H(+). Functionally, pyrophosphatase that hydrolyzes the non-canonical purine nucleotides inosine triphosphate (ITP), deoxyinosine triphosphate (dITP) as well as 2'-deoxy-N-6-hydroxylaminopurine triphosphate (dHAPTP) and xanthosine 5'-triphosphate (XTP) to their respective monophosphate derivatives. The enzyme does not distinguish between the deoxy- and ribose forms. Probably excludes non-canonical purines from RNA and DNA precursor pools, thus preventing their incorporation into RNA and DNA and avoiding chromosomal lesions. This is Inosine triphosphate pyrophosphatase from Homo sapiens (Human).